Reading from the N-terminus, the 219-residue chain is Type-5 uracil-DNA glycosylase (219 aa).

[4Fe-4S] cluster is bound by residues Cys13, Cys16, Cys115, and Cys130.

Belongs to the uracil-DNA glycosylase (UDG) superfamily. Type 5 (UDGb) family.

In terms of biological role, DNA glycosylase with broad substrate specificity. Can remove uracil from double-stranded DNA containing either a U/G, U/A, U/C or U/T base pair. Can also excise hypoxanthine from double-stranded DNA containing G/I, T/I, and A/I base pairs, xanthine from both double-stranded and single stranded DNA, thymine from G/T mismatched DNA, 5'-hydroxymethyluracil and 5'-fluorouracil. The polypeptide is Type-5 uracil-DNA glycosylase (Thermus thermophilus (strain ATCC 27634 / DSM 579 / HB8)).